The chain runs to 101 residues: Chaperone modulatory protein CbpM (101 aa).

It belongs to the CbpM family.

Interacts with CbpA and inhibits both the DnaJ-like co-chaperone activity and the DNA binding activity of CbpA. Together with CbpA, modulates the activity of the DnaK chaperone system. Does not inhibit the co-chaperone activity of DnaJ. This is Chaperone modulatory protein CbpM from Escherichia coli O1:K1 / APEC.